The chain runs to 254 residues: 3-deoxy-manno-octulosonate cytidylyltransferase (254 aa).

The protein belongs to the KdsB family.

It localises to the cytoplasm. It carries out the reaction 3-deoxy-alpha-D-manno-oct-2-ulosonate + CTP = CMP-3-deoxy-beta-D-manno-octulosonate + diphosphate. It participates in nucleotide-sugar biosynthesis; CMP-3-deoxy-D-manno-octulosonate biosynthesis; CMP-3-deoxy-D-manno-octulosonate from 3-deoxy-D-manno-octulosonate and CTP: step 1/1. Its pathway is bacterial outer membrane biogenesis; lipopolysaccharide biosynthesis. Activates KDO (a required 8-carbon sugar) for incorporation into bacterial lipopolysaccharide in Gram-negative bacteria. The sequence is that of 3-deoxy-manno-octulosonate cytidylyltransferase from Pseudomonas aeruginosa (strain LESB58).